A 173-amino-acid polypeptide reads, in one-letter code: Large ribosomal subunit protein uL10 (173 aa).

Belongs to the universal ribosomal protein uL10 family. Part of the ribosomal stalk of the 50S ribosomal subunit. The N-terminus interacts with L11 and the large rRNA to form the base of the stalk. The C-terminus forms an elongated spine to which L12 dimers bind in a sequential fashion forming a multimeric L10(L12)X complex.

Its function is as follows. Forms part of the ribosomal stalk, playing a central role in the interaction of the ribosome with GTP-bound translation factors. This is Large ribosomal subunit protein uL10 from Chlorobaculum tepidum (strain ATCC 49652 / DSM 12025 / NBRC 103806 / TLS) (Chlorobium tepidum).